Here is a 210-residue protein sequence, read N- to C-terminus: SAP domain-containing ribonucleoprotein (210 aa).

N-acetylalanine is present on A2. An SAP domain is found at 8 to 42 (LHKLKLAELKQECLARGLETKGIKQDLINRLQAYL). The residue at position 10 (K10) is an N6-acetyllysine. Positions 45 to 64 (HAEEEANEEDVLGDETEEEE) are enriched in acidic residues. The interval 45 to 87 (HAEEEANEEDVLGDETEEEEPKPIELPVKEEEPPEKVVDMASE) is disordered. Residues 65–87 (PKPIELPVKEEEPPEKVVDMASE) are compositionally biased toward basic and acidic residues. At K142 the chain carries N6-acetyllysine. The interval 161–210 (VSSISRKSEDDEKLKKRKERFGIVTSSAGTGTTEDTEAKKRKRAERFGIA) is disordered. Position 163 is a phosphoserine (S163). Residues 184-193 (VTSSAGTGTT) are compositionally biased toward polar residues.

It belongs to the SAP domain-containing ribonucleoprotein family. Interacts with DDX39A. Interacts with FUS. Interacts (via the C-terminal domain) with DDX39B; the interaction is direct and facilitates RNA binding of DDX39B. Component of the transcription/export (TREX) complex at least composed of ALYREF/THOC4, DDX39B, SARNP/CIP29, CHTOP and the THO subcomplex; TREX seems to have dynamic structure involving ATP-dependent remodeling; in the complex interacts directly with DDX39B in a ATP-dependent manner which bridges it to ALYREF/THOC4.

The protein resides in the nucleus. Its subcellular location is the nucleus speckle. Functionally, binds both single-stranded and double-stranded DNA with higher affinity for the single-stranded form. Specifically binds to scaffold/matrix attachment region DNA. Also binds single-stranded RNA. Enhances RNA unwinding activity of DDX39A. May participate in important transcriptional or translational control of cell growth, metabolism and carcinogenesis. Component of the TREX complex which is thought to couple mRNA transcription, processing and nuclear export, and specifically associates with spliced mRNA and not with unspliced pre-mRNA. The TREX complex is recruited to spliced mRNAs by a transcription-independent mechanism, binds to mRNA upstream of the exon-junction complex (EJC) and is recruited in a splicing- and cap-dependent manner to a region near the 5' end of the mRNA where it functions in mRNA export to the cytoplasm via the TAP/NXF1 pathway. Associates with DDX39B, which facilitates RNA binding of DDX39B and likely plays a role in mRNA export. The chain is SAP domain-containing ribonucleoprotein (Sarnp) from Rattus norvegicus (Rat).